We begin with the raw amino-acid sequence, 152 residues long: Natriuretic peptides A (152 aa).

The N-terminal stretch at 1 to 24 is a signal peptide; sequence MGSFSITKGFFLFLAFWLPGHIGA. Propeptides lie at residues 25 to 122 and 92 to 102; these read NPVY…AGPR and DGGALGRGPWD. Residues 54–104 form a disordered region; it reads DEVMPPQALSEQTDEAGAALSSLSEVPPWTGEVNPSQRDGGALGRGPWDPS. Residue serine 128 is modified to Phosphoserine. Cysteine 129 and cysteine 145 form a disulfide bridge. An important for degradation of atrial natriuretic peptide by IDE region spans residues 146-150; the sequence is NSFRY.

Belongs to the natriuretic peptide family. In terms of assembly, homodimer; disulfide-linked antiparallel dimer. In terms of processing, the precursor molecule is proteolytically cleaved by CORIN at Arg-122 to produce the atrial natriuretic peptide. Undergoes further proteolytic cleavage by unknown proteases to give rise to long-acting natriuretic peptide, vessel dilator and kaliuretic peptide. Additional processing gives rise to the auriculin and atriopeptin peptides. In the kidneys, alternative processing by an unknown protease results in the peptide urodilatin. Post-translationally, cleavage by MME initiates degradation of the factor and thereby regulates its activity. Degradation by IDE results in reduced activation of NPR1 (in vitro). During IDE degradation, the resulting products can temporarily stimulate NPR2 to produce cGMP, before the fragments are completely degraded and inactivated by IDE (in vitro). Degraded by IDE. In terms of processing, phosphorylation on Ser-128 decreases vasorelaxant activity. In terms of tissue distribution, high levels of expression in the atria compared to the ventricles. Very low levels of expression detected in extracardiac tissues such as the brain, hypothalamus, pituitary, lung and aorta. As to expression, atria (at protein level). High levels of expression in the atria with very low levels of expression in the ventricles (at protein level). Relatively low levels of expression detected in the brain compared to the atria (at protein level).

The protein resides in the secreted. It is found in the perikaryon. It localises to the cell projection. Functionally, hormone that plays a key role in mediating cardio-renal homeostasis, and is involved in vascular remodeling and regulating energy metabolism. Acts by specifically binding and stimulating NPR1 to produce cGMP, which in turn activates effector proteins, such as PRKG1, that drive various biological responses. Regulates vasodilation, natriuresis, diuresis and aldosterone synthesis and is therefore essential for regulating blood pressure, controlling the extracellular fluid volume and maintaining the fluid-electrolyte balance. Also involved in inhibiting cardiac remodeling and cardiac hypertrophy by inducing cardiomyocyte apoptosis and attenuating the growth of cardiomyocytes and fibroblasts. Plays a role in female pregnancy by promoting trophoblast invasion and spiral artery remodeling in uterus, and thus prevents pregnancy-induced hypertension. In adipose tissue, acts in various cGMP- and PKG-dependent pathways to regulate lipid metabolism and energy homeostasis. This includes up-regulating lipid metabolism and mitochondrial oxygen utilization by activating the AMP-activated protein kinase (AMPK), and increasing energy expenditure by acting via MAPK11 to promote the UCP1-dependent thermogenesis of brown adipose tissue. Binds the clearance receptor NPR3 which removes the hormone from circulation. Its function is as follows. May have a role in cardio-renal homeostasis through regulation of natriuresis, diuresis, vasodilation, and inhibiting aldosterone synthesis. In vitro, promotes the production of cGMP and induces vasodilation. May promote natriuresis, at least in part, by enhancing prostaglandin E2 synthesis resulting in the inhibition of renal Na+-K+-ATPase. However reports on the involvement of this peptide in mammal blood volume and blood pressure homeostasis are conflicting; according to a report, in vivo it is not sufficient to activate cGMP and does not inhibit collecting duct transport nor effect diuresis and natriuresis. Appears to bind to specific receptors that are distinct from the receptors bound by atrial natriuretic peptide and vessel dilator. Possibly enhances protein excretion in urine by decreasing proximal tubular protein reabsorption. May have a role in cardio-renal homeostasis through regulation of natriuresis, diuresis, and vasodilation. In vitro, promotes the production of cGMP and induces vasodilation. May promote natriuresis, at least in part, by enhancing prostaglandin E2 synthesis resulting in the inhibition of renal Na+-K+-ATPase. However reports on the involvement of this peptide in mammal blood volume and blood pressure homeostasis are conflicting; according to a report, in vivo it is not sufficient to activate cGMP and does not inhibit collecting duct transport nor effect diuresis and natriuresis. Appears to bind to specific receptors that are distinct from the receptors bound by the atrial natriuretic and long-acting natriuretic peptides. Possibly functions in protein excretion in urine by maintaining the integrity of the proximal tubules and enhancing protein excretion by decreasing proximal tubular protein reabsorption. In terms of biological role, may have a role in cardio-renal homeostasis through regulation of diuresis and inhibiting aldosterone synthesis. In vitro, promotes the production of cGMP and induces vasodilation. May promote natriuresis, at least in part, by enhancing prostaglandin E2 synthesis resulting in the inhibition of renal Na+-K+-ATPase. May have a role in potassium excretion but not sodium excretion (natriuresis). Possibly enhances protein excretion in urine by decreasing proximal tubular protein reabsorption. Functionally, hormone produced in the kidneys that appears to be important for maintaining cardio-renal homeostasis. Mediates vasodilation, natriuresis and diuresis primarily in the renal system, in order to maintain the extracellular fluid volume and control the fluid-electrolyte balance. Specifically binds and stimulates cGMP production by renal transmembrane receptors, likely NPR1. Urodilatin not ANP, may be the natriuretic peptide responsible for the regulation of sodium and water homeostasis in the kidney. Its function is as follows. May have a role in cardio-renal homeostasis through regulation of natriuresis and vasodilation. In vivo promotes natriuresis and in vitro, vasodilates renal artery strips. May have a role in cardio-renal homeostasis through regulation of regulation of natriuresis and vasodilation. In vivo promotes natriuresis. In vitro, vasodilates intestinal smooth muscle but not smooth muscle strips. In terms of biological role, may have a role in cardio-renal homeostasis through regulation of natriuresis and vasodilation. In vivo promotes natriuresis. In vitro, selectively vasodilates intestinal and vascular smooth muscle strips. Functionally, may have a role in cardio-renal homeostasis through regulation of natriuresis and vasodilation. In vivo promotes natriuresis. In vitro, selectively vasodilates intestinal smooth muscle but not vascular smooth muscle strips. This is Natriuretic peptides A (Nppa) from Rattus norvegicus (Rat).